Here is a 427-residue protein sequence, read N- to C-terminus: Peptidase B (427 aa).

Lysine 195 and aspartate 200 together coordinate Mn(2+). The active site involves lysine 207. Mn(2+) contacts are provided by aspartate 218, aspartate 277, and glutamate 279. The active site involves arginine 281.

The protein belongs to the peptidase M17 family. As to quaternary structure, homohexamer. Mn(2+) is required as a cofactor.

It localises to the cytoplasm. The enzyme catalyses Release of an N-terminal amino acid, Xaa, from a peptide or arylamide. Xaa is preferably Glu or Asp but may be other amino acids, including Leu, Met, His, Cys and Gln.. Functionally, probably plays an important role in intracellular peptide degradation. The polypeptide is Peptidase B (Escherichia coli (strain SMS-3-5 / SECEC)).